The following is a 188-amino-acid chain: Xanthine phosphoribosyltransferase (188 aa).

Positions 20 and 27 each coordinate xanthine. 5-phospho-alpha-D-ribose 1-diphosphate is bound at residue 127–131; it reads AHGEA. K155 lines the xanthine pocket.

This sequence belongs to the purine/pyrimidine phosphoribosyltransferase family. Xpt subfamily. Homodimer.

Its subcellular location is the cytoplasm. The catalysed reaction is XMP + diphosphate = xanthine + 5-phospho-alpha-D-ribose 1-diphosphate. The protein operates within purine metabolism; XMP biosynthesis via salvage pathway; XMP from xanthine: step 1/1. Its function is as follows. Converts the preformed base xanthine, a product of nucleic acid breakdown, to xanthosine 5'-monophosphate (XMP), so it can be reused for RNA or DNA synthesis. The protein is Xanthine phosphoribosyltransferase of Heliobacterium modesticaldum (strain ATCC 51547 / Ice1).